We begin with the raw amino-acid sequence, 156 residues long: Small ribosomal subunit protein uS7 (156 aa).

Belongs to the universal ribosomal protein uS7 family. As to quaternary structure, part of the 30S ribosomal subunit. Contacts proteins S9 and S11.

Functionally, one of the primary rRNA binding proteins, it binds directly to 16S rRNA where it nucleates assembly of the head domain of the 30S subunit. Is located at the subunit interface close to the decoding center, probably blocks exit of the E-site tRNA. The polypeptide is Small ribosomal subunit protein uS7 (Citrifermentans bemidjiense (strain ATCC BAA-1014 / DSM 16622 / JCM 12645 / Bem) (Geobacter bemidjiensis)).